The following is a 335-amino-acid chain: 3-hydroxyisobutyrate dehydrogenase, mitochondrial (335 aa).

A mitochondrion-targeting transit peptide spans 1 to 35 (MAASLGFRGAASGLWYWSGRRRPVGSLAAVCSRSM). NAD(+) is bound at residue 39–68 (TPVGFIGLGNMGNPMAKNLMKHGYPLILYD). An N6-acetyllysine; alternate mark is found at K59, K75, and K78. Residues K59, K75, and K78 each carry the N6-succinyllysine; alternate modification. An N6-succinyllysine modification is found at K94. NAD(+)-binding positions include 102–103 (LP) and N107. K120 is subject to N6-acetyllysine. T133 contributes to the NAD(+) binding site. Position 140 is an N6-succinyllysine (K140). K144 bears the N6-acetyllysine mark. Position 148 is an N6-acetyllysine; alternate (K148). An N6-succinyllysine; alternate modification is found at K148. K208 is a catalytic residue. K237 and K241 each carry N6-acetyllysine; alternate. Residues K237 and K241 each carry the N6-succinyllysine; alternate modification. K283 contributes to the NAD(+) binding site. At K296 the chain carries N6-succinyllysine. K320 carries the N6-acetyllysine; alternate modification. The residue at position 320 (K320) is an N6-succinyllysine; alternate.

Belongs to the HIBADH-related family. 3-hydroxyisobutyrate dehydrogenase subfamily. As to quaternary structure, homodimer.

Its subcellular location is the mitochondrion. It carries out the reaction 3-hydroxy-2-methylpropanoate + NAD(+) = 2-methyl-3-oxopropanoate + NADH + H(+). Its pathway is amino-acid degradation; L-valine degradation. In Mus musculus (Mouse), this protein is 3-hydroxyisobutyrate dehydrogenase, mitochondrial (Hibadh).